A 349-amino-acid chain; its full sequence is N-formyl peptide receptor 3 (349 aa).

Over 1–27 (METNFSIPLNETEEVLPEPAGHTVLWI) the chain is Extracellular. N-linked (GlcNAc...) asparagine glycans are attached at residues Asn-4 and Asn-10. Residues 28 to 50 (FSLLVHGVTFVFGVLGNGLVIWV) form a helical membrane-spanning segment. Over 51–61 (AGFRMTRTVNT) the chain is Cytoplasmic. A helical transmembrane segment spans residues 62–83 (ICYLNLALADFSFSAILPFRMV). At 84-100 (SVAMREKWPFGSFLCKL) the chain is on the extracellular side. Cys-98 and Cys-176 are oxidised to a cystine. Residues 101 to 121 (VHVMIDINLFVSVYLITIIAL) traverse the membrane as a helical segment. Over 122-140 (DRCICVLHPAWAQNHRTMS) the chain is Cytoplasmic. Residues 141–162 (LAKRVMTGLWILTIVLTLPNFI) form a helical membrane-spanning segment. The Extracellular segment spans residues 163 to 205 (FWTTIRTTNGDTYCIFNFAFWGDTAVERLNVFITMAKVFLILH). The helical transmembrane segment at 206–226 (FIIGFSMPMSIITVCYGIIAA) threads the bilayer. Residues 227-242 (KIHRNHMIKSSRPLRV) lie on the Cytoplasmic side of the membrane. A helical transmembrane segment spans residues 243–266 (FAAVVASFFICWFPYELIGILMAV). Residues 267–286 (WLKEMLLNGKYKIILVLINP) lie on the Extracellular side of the membrane. The chain crosses the membrane as a helical span at residues 287–306 (TSSLAFFNSCLNPILYVFMG). Topologically, residues 307–349 (RNFQERLIRSLPTSLERALTEVPDSAQTSNTHTTSASPPEETE) are cytoplasmic. The interval 327–349 (EVPDSAQTSNTHTTSASPPEETE) is disordered. Polar residues predominate over residues 331–343 (SAQTSNTHTTSAS).

The protein belongs to the G-protein coupled receptor 1 family.

It localises to the cell membrane. Its function is as follows. Low affinity receptor for N-formyl-methionyl peptides, which are powerful neutrophils chemotactic factors. Binding of FMLP to the receptor causes activation of neutrophils. This response is mediated via a G-protein that activates a phosphatidylinositol-calcium second messenger system. The sequence is that of N-formyl peptide receptor 3 (FPR3) from Pan troglodytes (Chimpanzee).